The following is a 178-amino-acid chain: Large ribosomal subunit protein uL6 (178 aa).

Belongs to the universal ribosomal protein uL6 family. As to quaternary structure, part of the 50S ribosomal subunit.

Functionally, this protein binds to the 23S rRNA, and is important in its secondary structure. It is located near the subunit interface in the base of the L7/L12 stalk, and near the tRNA binding site of the peptidyltransferase center. The sequence is that of Large ribosomal subunit protein uL6 from Geobacillus kaustophilus (strain HTA426).